The chain runs to 203 residues: ER membrane protein complex subunit 8/9 homolog (203 aa).

The 137-residue stretch at 4 to 140 (YKVSERAYAK…IQVFNCPGDS (137 aa)) folds into the MPN domain.

It belongs to the EMC8/EMC9 family. Component of the ER membrane protein complex (EMC).

The protein resides in the endoplasmic reticulum membrane. Its function is as follows. Part of the endoplasmic reticulum membrane protein complex (EMC) that enables the energy-independent insertion into endoplasmic reticulum membranes of newly synthesized multi-pass membrane proteins like rhodopsins. The polypeptide is ER membrane protein complex subunit 8/9 homolog (Drosophila melanogaster (Fruit fly)).